A 58-amino-acid chain; its full sequence is Cecropin-A (58 aa).

The signal sequence occupies residues 1 to 23 (MNFSKIFIFVVLAVLLLCSQTEA). Leu-57 carries the leucine amide modification.

Belongs to the cecropin family. In terms of tissue distribution, relatively abundant in head, thorax and to a lesser extent in abdominal carcass and anterior midgut.

The protein localises to the secreted. In terms of biological role, antibacterial activity against several Gram-positive and Gram-negative bacteria. Antifungal activity against A.fumigatus, B.cinerea, F.culmorum, F.oxysporum, N.crassa, C.albicans, C.neoformans and S.cerevisiae. This Anopheles gambiae (African malaria mosquito) protein is Cecropin-A (CecA).